Reading from the N-terminus, the 79-residue chain is Mycoredoxin 1 (79 aa).

A Glutaredoxin domain is found at 1-79; that stretch reads MSNVTIYATD…EVIAKIEALA (79 aa).

This sequence belongs to the glutaredoxin family.

The protein localises to the cytoplasm. The enzyme catalyses [mycoredoxin]-L-cysteine + arseno-mycothiol + H(+) = [mycoredoxin]-S-mycothiol-L-cysteine + arsenite. Its function is as follows. Involved in defense against toxic arsenate. Involved in the mycothiol/myoredoxin redox pathway which uses a mycothioltransferase mechanism; functions as a monothiol mixed disulfide reductase and is recycled by a second mycothiol forming mycothione which in turn is reduced in a NADPH-dependent manner. This Corynebacterium glutamicum (strain ATCC 13032 / K051) protein is Mycoredoxin 1 (mrx1).